Reading from the N-terminus, the 152-residue chain is MFRGATLVNLDSKGRLTVPTRYREQLIESATGQMVCTIDIHHPCLLLYPLPEWEIIEQKLSRLSSMNPVERRVQRLLLGHASECQMDGAGRLLIAPVLRQHAGLTKEVMLVGQFNKFELWDETTWYQQVKEDIDAEQSATETLSERLQDLSL.

SpoVT-AbrB domains follow at residues 5–52 and 81–124; these read ATLV…PLPE and ASEC…DETT.

It belongs to the MraZ family. As to quaternary structure, forms oligomers.

The protein localises to the cytoplasm. It localises to the nucleoid. Its function is as follows. Negatively regulates its own expression and that of the subsequent genes in the proximal part of the division and cell wall (dcw) gene cluster. Acts by binding directly to DNA. May also regulate the expression of genes outside the dcw cluster. The polypeptide is Transcriptional regulator MraZ (Salmonella gallinarum (strain 287/91 / NCTC 13346)).